A 374-amino-acid chain; its full sequence is DNA integrity scanning protein DisA (374 aa).

In terms of domain architecture, DAC spans 20-158; that stretch reads DGLMRASLSA…DGQRRVLEDS (139 aa). Residues G87, L105, and 118–122 contribute to the ATP site; that span reads TRHRT.

This sequence belongs to the DisA family. In terms of assembly, homooctamer. Interacts with RadA. Mg(2+) serves as cofactor.

It carries out the reaction 2 ATP = 3',3'-c-di-AMP + 2 diphosphate. Its activity is regulated as follows. Diadenylate cyclase activity is inhibited by the interaction with RadA. Participates in a DNA-damage check-point that is active prior to asymmetric division when DNA is damaged. DisA forms globular foci that rapidly scan along the chromosomes during sporulation, searching for lesions. When a lesion is present, DisA pauses at the lesion site. This triggers a cellular response that culminates in a temporary block in sporulation initiation. Its function is as follows. Also has diadenylate cyclase activity, catalyzing the condensation of 2 ATP molecules into cyclic di-AMP (c-di-AMP). c-di-AMP acts as a signaling molecule that couples DNA integrity with progression of sporulation. The rise in c-di-AMP level generated by DisA while scanning the chromosome, operates as a positive signal that advances sporulation; upon encountering a lesion, the DisA focus arrests at the damaged site and halts c-di-AMP synthesis. The polypeptide is DNA integrity scanning protein DisA (Streptomyces coelicolor (strain ATCC BAA-471 / A3(2) / M145)).